Reading from the N-terminus, the 244-residue chain is Lactate utilization protein A (244 aa).

The protein belongs to the LutA/YkgE family.

Its function is as follows. Is involved in L-lactate degradation and allows cells to grow with lactate as the sole carbon source. The protein is Lactate utilization protein A of Oceanobacillus iheyensis (strain DSM 14371 / CIP 107618 / JCM 11309 / KCTC 3954 / HTE831).